The following is a 171-amino-acid chain: CASP-like protein 0U2 (171 aa).

At 1 to 22 (MPVFGLAALKLNWEALSTPKFR) the chain is on the cytoplasmic side. Residues 23 to 42 (VTFAQWVCSLLMWSLMASYS) form a helical membrane-spanning segment. The Extracellular segment spans residues 43 to 48 (KHGEFK). The chain crosses the membrane as a helical span at residues 49 to 69 (FVVVFGLVMWGLASTYLVYQL). Residues 70-77 (LNGPPLAP) are Cytoplasmic-facing. A helical membrane pass occupies residues 78–98 (IVEFWANVAAGSLAFICLVLA). Residues 99–121 (SATCNRAVGEPQTKVCSGELKPK) lie on the Extracellular side of the membrane. Residues 122–142 (ASAAFAFLLLCAYGGLAYLSW) traverse the membrane as a helical segment. Residues 143 to 171 (RTWRNPPTIASYALHDDPEFAQPLHSSHK) lie on the Cytoplasmic side of the membrane.

Belongs to the Casparian strip membrane proteins (CASP) family. As to quaternary structure, homodimer and heterodimers.

It localises to the cell membrane. This chain is CASP-like protein 0U2, found in Chlorokybus atmophyticus (Soil alga).